Here is a 234-residue protein sequence, read N- to C-terminus: Multicopy suppressor of SEC21 protein 28 (234 aa).

Topologically, residues 1–47 (MQTPPESTDVKLDTLNEPSAHLIEKNVALPKDIFRSYLSYWIYEIAR) are cytoplasmic. The residue at position 3 (T3) is a Phosphothreonine. Residues 48–68 (YTPVMILSLVIGVLVLLIIFF) form a helical membrane-spanning segment. The Extracellular segment spans residues 69 to 72 (NDNE). A helical membrane pass occupies residues 73–93 (ACVFNSAIFAFTSLVGLLIIL). The Cytoplasmic segment spans residues 94 to 234 (SDGNPKLVSR…NIDALLKKTE (141 aa)). Residues 231–234 (KKTE) form a COPI binding region.

This sequence belongs to the DUP/COS family. Interacts with MST27. Binds to coatomer proteins of COPI and SEC23/SEC24 of COPII coated vesicles.

The protein resides in the endoplasmic reticulum. It localises to the golgi apparatus. It is found in the cytoplasmic vesicle. Its subcellular location is the COPI-coated vesicle membrane. The protein localises to the COPII-coated vesicle membrane. In terms of biological role, involved in protein trafficking vesicle formation, probably by stabilizing of coatomer at the Golgi membrane and thus allowing the efficient formation of COPI coated vesicles. In Saccharomyces cerevisiae (strain ATCC 204508 / S288c) (Baker's yeast), this protein is Multicopy suppressor of SEC21 protein 28 (MST28).